Here is a 298-residue protein sequence, read N- to C-terminus: Ribosomal RNA small subunit methyltransferase A (298 aa).

S-adenosyl-L-methionine is bound by residues asparagine 35, leucine 37, glycine 62, glutamate 83, aspartate 108, and asparagine 133.

Belongs to the class I-like SAM-binding methyltransferase superfamily. rRNA adenine N(6)-methyltransferase family. RsmA subfamily.

The protein resides in the cytoplasm. The enzyme catalyses adenosine(1518)/adenosine(1519) in 16S rRNA + 4 S-adenosyl-L-methionine = N(6)-dimethyladenosine(1518)/N(6)-dimethyladenosine(1519) in 16S rRNA + 4 S-adenosyl-L-homocysteine + 4 H(+). Its function is as follows. Specifically dimethylates two adjacent adenosines (A1518 and A1519) in the loop of a conserved hairpin near the 3'-end of 16S rRNA in the 30S particle. May play a critical role in biogenesis of 30S subunits. The polypeptide is Ribosomal RNA small subunit methyltransferase A (Streptococcus pyogenes serotype M12 (strain MGAS9429)).